The primary structure comprises 458 residues: RuvB-like helicase 1 (458 aa).

The tract at residues 1–29 (MVQISEVKGNSRDNRTAAHTHIKGLGLRP) is disordered. 71 to 78 (GGPGTGKT) is an ATP binding site.

This sequence belongs to the RuvB family. May form heterododecamers with RVB2. Component of the SWR1 chromatin remodeling complex, the INO80 chromatin remodeling complex, and of the R2TP complex.

It is found in the nucleus. It catalyses the reaction ATP + H2O = ADP + phosphate + H(+). DNA helicase which participates in several chromatin remodeling complexes, including the SWR1 and the INO80 complexes. The SWR1 complex mediates the ATP-dependent exchange of histone H2A for the H2A variant HZT1 leading to transcriptional regulation of selected genes by chromatin remodeling. The INO80 complex remodels chromatin by shifting nucleosomes and is involved in DNA repair. Also involved in pre-rRNA processing. This Emericella nidulans (strain FGSC A4 / ATCC 38163 / CBS 112.46 / NRRL 194 / M139) (Aspergillus nidulans) protein is RuvB-like helicase 1 (rvb1).